A 576-amino-acid polypeptide reads, in one-letter code: Sulfite reductase [NADPH] hemoprotein beta-component (576 aa).

The [4Fe-4S] cluster site is built by cysteine 435, cysteine 441, cysteine 480, and cysteine 484. Cysteine 484 contributes to the siroheme binding site.

This sequence belongs to the nitrite and sulfite reductase 4Fe-4S domain family. As to quaternary structure, alpha(8)-beta(8). The alpha component is a flavoprotein, the beta component is a hemoprotein. Siroheme serves as cofactor. It depends on [4Fe-4S] cluster as a cofactor.

The enzyme catalyses hydrogen sulfide + 3 NADP(+) + 3 H2O = sulfite + 3 NADPH + 4 H(+). It functions in the pathway sulfur metabolism; hydrogen sulfide biosynthesis; hydrogen sulfide from sulfite (NADPH route): step 1/1. Component of the sulfite reductase complex that catalyzes the 6-electron reduction of sulfite to sulfide. This is one of several activities required for the biosynthesis of L-cysteine from sulfate. In Yersinia pestis bv. Antiqua (strain Antiqua), this protein is Sulfite reductase [NADPH] hemoprotein beta-component.